We begin with the raw amino-acid sequence, 199 residues long: Ribosome maturation factor RimM (199 aa).

Positions 93–169 constitute a PRC barrel domain; the sequence is DDEYYHADLI…IELPDEIDGE (77 aa). Residues 164–199 are disordered; the sequence is DEIDGEDRASADESASAEDDAAAPNSARHPRESGDP.

The protein belongs to the RimM family. In terms of assembly, binds ribosomal protein uS19.

It localises to the cytoplasm. Its function is as follows. An accessory protein needed during the final step in the assembly of 30S ribosomal subunit, possibly for assembly of the head region. Essential for efficient processing of 16S rRNA. May be needed both before and after RbfA during the maturation of 16S rRNA. It has affinity for free ribosomal 30S subunits but not for 70S ribosomes. This Bradyrhizobium sp. (strain ORS 278) protein is Ribosome maturation factor RimM.